The chain runs to 909 residues: Protein translocase subunit SecA (909 aa).

Residues Gln-87, 105–109 (GEGKT), and Asp-507 each bind ATP. The interval 857 to 909 (DTHSELAEEQPPVAENRENKQQPFVRKNEKVGRNDPCPCGSGKKYKQCHGKLN) is disordered. The span at 871-889 (ENRENKQQPFVRKNEKVGR) shows a compositional bias: basic and acidic residues. Zn(2+) contacts are provided by Cys-893, Cys-895, Cys-904, and His-905. A compositionally biased stretch (basic residues) spans 899–909 (KKYKQCHGKLN).

The protein belongs to the SecA family. As to quaternary structure, monomer and homodimer. Part of the essential Sec protein translocation apparatus which comprises SecA, SecYEG and auxiliary proteins SecDF-YajC and YidC. It depends on Zn(2+) as a cofactor.

The protein localises to the cell inner membrane. The protein resides in the cytoplasm. It catalyses the reaction ATP + H2O + cellular proteinSide 1 = ADP + phosphate + cellular proteinSide 2.. Functionally, part of the Sec protein translocase complex. Interacts with the SecYEG preprotein conducting channel. Has a central role in coupling the hydrolysis of ATP to the transfer of proteins into and across the cell membrane, serving both as a receptor for the preprotein-SecB complex and as an ATP-driven molecular motor driving the stepwise translocation of polypeptide chains across the membrane. The sequence is that of Protein translocase subunit SecA from Nitrosomonas europaea (strain ATCC 19718 / CIP 103999 / KCTC 2705 / NBRC 14298).